The following is a 359-amino-acid chain: Ras association domain-containing protein 7 (359 aa).

The region spanning 6 to 89 is the Ras-associating domain; that stretch reads VAMELKVWVD…VQFVLRRTGP (84 aa). A disordered region spans residues 87–123; the sequence is TGPSLSGRPSSDNCPPPERCPVRASLPPKPSAIPGRE. Positions 89–99 are enriched in polar residues; that stretch reads PSLSGRPSSDN. 2 coiled-coil regions span residues 180–208 and 242–301; these read WEQELQREQAREREGQARLQALSAATAEH and AAER…QQFI. Residues 339–359 form a disordered region; the sequence is SHILVSSLSPEVPPMRQSSWR.

In terms of assembly, interacts with MAP2K7 and GTP-bound NRAS. Polyubiquitinated and degraded by the proteasome upon prolonged stress stimuli.

The protein localises to the cytoplasm. The protein resides in the cytoskeleton. It is found in the microtubule organizing center. Its subcellular location is the centrosome. Its function is as follows. Negatively regulates stress-induced JNK activation and apoptosis by promoting MAP2K7 phosphorylation and inhibiting its ability to activate JNK. Following prolonged stress, anti-apoptotic effect stops because of degradation of RASSF7 protein via the ubiquitin-proteasome pathway. Required for the activation of AURKB and chromosomal congression during mitosis where it stimulates microtubule polymerization. This chain is Ras association domain-containing protein 7 (Rassf7), found in Mus musculus (Mouse).